Consider the following 153-residue polypeptide: IAA acetyltransferase (153 aa).

An N-acetyltransferase domain is found at 4-153 (VTIARESPLQ…PLSLFMEKPL (150 aa)).

Functionally, participates in the tryptophan-dependent indole-3-acetic acid production, which is a phytohormone released by A.brasilense. This Azospirillum brasilense protein is IAA acetyltransferase.